We begin with the raw amino-acid sequence, 157 residues long: Ribosomal RNA large subunit methyltransferase H (157 aa).

Residues leucine 74, glycine 106, and 125 to 130 (LSDMTL) contribute to the S-adenosyl-L-methionine site.

This sequence belongs to the RNA methyltransferase RlmH family. Homodimer.

Its subcellular location is the cytoplasm. The catalysed reaction is pseudouridine(1915) in 23S rRNA + S-adenosyl-L-methionine = N(3)-methylpseudouridine(1915) in 23S rRNA + S-adenosyl-L-homocysteine + H(+). In terms of biological role, specifically methylates the pseudouridine at position 1915 (m3Psi1915) in 23S rRNA. In Desulfovibrio desulfuricans (strain ATCC 27774 / DSM 6949 / MB), this protein is Ribosomal RNA large subunit methyltransferase H.